A 353-amino-acid chain; its full sequence is Phosphoribosylformylglycinamidine cyclo-ligase (353 aa).

The protein belongs to the AIR synthase family.

The protein resides in the cytoplasm. The enzyme catalyses 2-formamido-N(1)-(5-O-phospho-beta-D-ribosyl)acetamidine + ATP = 5-amino-1-(5-phospho-beta-D-ribosyl)imidazole + ADP + phosphate + H(+). The protein operates within purine metabolism; IMP biosynthesis via de novo pathway; 5-amino-1-(5-phospho-D-ribosyl)imidazole from N(2)-formyl-N(1)-(5-phospho-D-ribosyl)glycinamide: step 2/2. This Symbiobacterium thermophilum (strain DSM 24528 / JCM 14929 / IAM 14863 / T) protein is Phosphoribosylformylglycinamidine cyclo-ligase.